The chain runs to 199 residues: Protein GrpE (199 aa).

A disordered region spans residues 1-27 (MSEQNTNHESPEQNVAHDNIEHSDSIL). The segment covering 18–27 (DNIEHSDSIL) has biased composition (basic and acidic residues).

The protein belongs to the GrpE family. As to quaternary structure, homodimer.

Its subcellular location is the cytoplasm. Functionally, participates actively in the response to hyperosmotic and heat shock by preventing the aggregation of stress-denatured proteins, in association with DnaK and GrpE. It is the nucleotide exchange factor for DnaK and may function as a thermosensor. Unfolded proteins bind initially to DnaJ; upon interaction with the DnaJ-bound protein, DnaK hydrolyzes its bound ATP, resulting in the formation of a stable complex. GrpE releases ADP from DnaK; ATP binding to DnaK triggers the release of the substrate protein, thus completing the reaction cycle. Several rounds of ATP-dependent interactions between DnaJ, DnaK and GrpE are required for fully efficient folding. The polypeptide is Protein GrpE (Psychrobacter sp. (strain St1)).